A 228-amino-acid polypeptide reads, in one-letter code: Sodium channel regulatory subunit beta-4 (228 aa).

An N-terminal signal peptide occupies residues 1–30; sequence MPGAGDGGKAPARWLGTGLLGLFLLPVTLS. The region spanning 31–148 is the Ig-like C2-type domain; the sequence is LEVSVGKATD…NNLQHHATIF (118 aa). Residues 31-162 are Extracellular-facing; the sequence is LEVSVGKATD…DRLEEVDNTV (132 aa). N-linked (GlcNAc...) asparagine glycosylation is found at asparagine 45, asparagine 71, and asparagine 113. Cysteine 53 and cysteine 131 are oxidised to a cystine. Residues 163 to 183 traverse the membrane as a helical segment; that stretch reads TLIILAVVGGVIGLLILILLI. The Cytoplasmic segment spans residues 184–228; the sequence is KKLIIFILKKTREKKKECLVSSSGNDNTENGLPGSKAEEKPPSKV. Residues 200–228 are disordered; that stretch reads ECLVSSSGNDNTENGLPGSKAEEKPPSKV. Residues 203-213 are compositionally biased toward polar residues; sequence VSSSGNDNTEN. A compositionally biased stretch (basic and acidic residues) spans 219–228; the sequence is KAEEKPPSKV.

Belongs to the sodium channel auxiliary subunit SCN4B (TC 8.A.17) family. In terms of assembly, a voltage-gated sodium (Nav) channel consists of an ion-conducting pore-forming alpha subunit functional on its own that is regulated by one or more beta subunits. The beta subunit SCN4B is disulfide-linked to the pore-forming alpha subunit. Interacts with SCN1A; regulatory subunit of SCN1A/Nav1.1. Interacts with SCN2A; regulatory subunit of SCN2A/Nav1.2. Post-translationally, contains an interchain disulfide bond with SCN2A. N-glycosylated. As to expression, expressed at a high level in dorsal root ganglia, at a lower level in brain, spinal cord, skeletal muscle and heart. Expressed in the atrium.

It is found in the cell membrane. Functionally, regulatory subunit of multiple voltage-gated sodium (Nav) channels directly mediating the depolarization of excitable membranes. Navs, also called VGSCs (voltage-gated sodium channels) or VDSCs (voltage-dependent sodium channels), operate by switching between closed and open conformations depending on the voltage difference across the membrane. In the open conformation they allow Na(+) ions to selectively pass through the pore, along their electrochemical gradient. The influx of Na+ ions provokes membrane depolarization, initiating the propagation of electrical signals throughout cells and tissues. The accessory beta subunits participate in localization and functional modulation of the Nav channels. Modulates the activity of SCN1A/Nav1.1. Modulates the activity of SCN2A/Nav1.2. The sequence is that of Sodium channel regulatory subunit beta-4 from Homo sapiens (Human).